We begin with the raw amino-acid sequence, 138 residues long: Acidic phospholipase A2 VpaPLA2 (138 aa).

Residues 1-16 form the signal peptide; the sequence is MRTLWIVAVCLMGVEG. 7 disulfide bridges follow: Cys-42–Cys-131, Cys-44–Cys-60, Cys-59–Cys-111, Cys-65–Cys-138, Cys-66–Cys-104, Cys-73–Cys-97, and Cys-91–Cys-102. Ca(2+) is bound by residues Tyr-43, Gly-45, and Gly-47. His-63 is a catalytic residue. Position 64 (Asp-64) interacts with Ca(2+). Residue Asp-105 is part of the active site.

The protein belongs to the phospholipase A2 family. Group II subfamily. D49 sub-subfamily. Requires Ca(2+) as cofactor. As to expression, expressed by the venom gland.

The protein resides in the secreted. It catalyses the reaction a 1,2-diacyl-sn-glycero-3-phosphocholine + H2O = a 1-acyl-sn-glycero-3-phosphocholine + a fatty acid + H(+). Its function is as follows. Snake venom phospholipase A2 (PLA2) that causes a sudden decrease of arterial blood pressure when injected into rat, but is not lethal. When co-injected with an uncharacterized basic protein (which did not show any enzymatic activity, but also causes a drop in blood pressure), this synergistical mixture is lethal. PLA2 catalyzes the calcium-dependent hydrolysis of the 2-acyl groups in 3-sn-phosphoglycerides. This chain is Acidic phospholipase A2 VpaPLA2, found in Daboia palaestinae (Palestine viper).